A 343-amino-acid chain; its full sequence is Probable F-box protein At1g67455 (343 aa).

Residues 1–46 form the F-box domain; the sequence is MMISDLPEDMVEEILSRVSIISLGALRWNDLSKARVICKAEARQQF.

This Arabidopsis thaliana (Mouse-ear cress) protein is Probable F-box protein At1g67455.